The following is a 476-amino-acid chain: Stromelysin-2 (476 aa).

The first 17 residues, 1 to 17, serve as a signal peptide directing secretion; it reads MEPLAILVLLCFPICSA. A propeptide spans 18-99 (activation peptide); sequence YPLHGAVRQD…PRCGVPDVGG (82 aa). The short motif at 90 to 97 is the Cysteine switch element; it reads PRCGVPDV. The Zn(2+) site is built by Cys92, His168, Asp170, His183, His196, and His218. Residue Glu219 is part of the active site. Residues His222 and His228 each coordinate Zn(2+). Hemopexin repeat units follow at residues 286-335, 336-382, 384-432, and 433-476; these read PVKC…WPSL, PSGL…GFPP, VKKI…FPGI, and EPQV…WLLC. The cysteines at positions 289 and 476 are disulfide-linked.

Belongs to the peptidase M10A family. It depends on Zn(2+) as a cofactor. Ca(2+) is required as a cofactor.

The protein localises to the secreted. It is found in the extracellular space. Its subcellular location is the extracellular matrix. The enzyme catalyses Similar to stromelysin 1, but action on collagen types III, IV and V is weak.. Functionally, can degrade fibronectin, gelatins of type I, III, IV, and V; weakly collagens III, IV, and V. Activates procollagenase. The protein is Stromelysin-2 (Mmp10) of Rattus norvegicus (Rat).